The sequence spans 208 residues: N-(5'-phosphoribosyl)anthranilate isomerase (208 aa).

Belongs to the TrpF family.

It carries out the reaction N-(5-phospho-beta-D-ribosyl)anthranilate = 1-(2-carboxyphenylamino)-1-deoxy-D-ribulose 5-phosphate. Its pathway is amino-acid biosynthesis; L-tryptophan biosynthesis; L-tryptophan from chorismate: step 3/5. This Methanococcus maripaludis (strain C5 / ATCC BAA-1333) protein is N-(5'-phosphoribosyl)anthranilate isomerase.